The following is a 501-amino-acid chain: Lysine--tRNA ligase (501 aa).

Mg(2+) is bound by residues E411 and E418.

The protein belongs to the class-II aminoacyl-tRNA synthetase family. Homodimer. The cofactor is Mg(2+).

It is found in the cytoplasm. The catalysed reaction is tRNA(Lys) + L-lysine + ATP = L-lysyl-tRNA(Lys) + AMP + diphosphate. This chain is Lysine--tRNA ligase, found in Thiobacillus denitrificans (strain ATCC 25259 / T1).